The sequence spans 732 residues: Catalase-peroxidase (732 aa).

The first 45 residues, 1–45 (MDTKVDNAGKCPVVHTHTAHGGRSNRDWWPNQLNLRILHQNSSLS), serve as a signal peptide directing secretion. The tryptophyl-tyrosyl-methioninium (Trp-Tyr) (with M-246) cross-link spans 97–220 (WHSAGTYRTG…LSAVQMGLIY (124 aa)). His-98 acts as the Proton acceptor in catalysis. The segment at residues 220 to 246 (YVNPEGPNGNPDPLAAARDIRETFARM) is a cross-link (tryptophyl-tyrosyl-methioninium (Tyr-Met) (with W-97)). Residue His-261 coordinates heme b.

The protein belongs to the peroxidase family. Peroxidase/catalase subfamily. As to quaternary structure, homodimer or homotetramer. Heme b is required as a cofactor. Formation of the three residue Trp-Tyr-Met cross-link is important for the catalase, but not the peroxidase activity of the enzyme.

The catalysed reaction is H2O2 + AH2 = A + 2 H2O. It catalyses the reaction 2 H2O2 = O2 + 2 H2O. Its function is as follows. Bifunctional enzyme with both catalase and broad-spectrum peroxidase activity. The protein is Catalase-peroxidase of Rhizobium rhizogenes (strain K84 / ATCC BAA-868) (Agrobacterium radiobacter).